A 145-amino-acid polypeptide reads, in one-letter code: Succinate dehydrogenase assembly factor 2, mitochondrial (145 aa).

Belongs to the SDHAF2 family. In terms of assembly, interacts with the flavoprotein subunit within the SDH catalytic dimer.

It localises to the mitochondrion matrix. In terms of biological role, plays an essential role in the assembly of succinate dehydrogenase (SDH), an enzyme complex (also referred to as respiratory complex II) that is a component of both the tricarboxylic acid (TCA) cycle and the mitochondrial electron transport chain, and which couples the oxidation of succinate to fumarate with the reduction of ubiquinone (coenzyme Q) to ubiquinol. Required for flavinylation (covalent attachment of FAD) of the flavoprotein subunit of the SDH catalytic dimer. This Yarrowia lipolytica (strain CLIB 122 / E 150) (Yeast) protein is Succinate dehydrogenase assembly factor 2, mitochondrial.